Consider the following 381-residue polypeptide: Chaperone protein DnaJ (381 aa).

Positions 5–70 (DFYEVLGVGR…QKKAAYDQYG (66 aa)) constitute a J domain. The segment at 136-214 (GCSKEIEVPT…CHGQGRKQKT (79 aa)) adopts a CR-type zinc-finger fold. Positions 149, 152, 166, 169, 188, 191, 202, and 205 each coordinate Zn(2+). CXXCXGXG motif repeat units lie at residues 149–156 (CDACDGSG), 166–173 (CGTCHGHG), 188–195 (CPTCHGKG), and 202–209 (CNVCHGQG).

Belongs to the DnaJ family. As to quaternary structure, homodimer. The cofactor is Zn(2+).

Its subcellular location is the cytoplasm. Participates actively in the response to hyperosmotic and heat shock by preventing the aggregation of stress-denatured proteins and by disaggregating proteins, also in an autonomous, DnaK-independent fashion. Unfolded proteins bind initially to DnaJ; upon interaction with the DnaJ-bound protein, DnaK hydrolyzes its bound ATP, resulting in the formation of a stable complex. GrpE releases ADP from DnaK; ATP binding to DnaK triggers the release of the substrate protein, thus completing the reaction cycle. Several rounds of ATP-dependent interactions between DnaJ, DnaK and GrpE are required for fully efficient folding. Also involved, together with DnaK and GrpE, in the DNA replication of plasmids through activation of initiation proteins. This is Chaperone protein DnaJ from Vibrio cholerae serotype O1 (strain ATCC 39541 / Classical Ogawa 395 / O395).